Reading from the N-terminus, the 124-residue chain is Small polypeptide ROTUNDIFOLIA LIKE 3 (124 aa).

Residues 1–23 form a disordered region; that stretch reads MEDERWKLSSSKGRSKSGRSCSS. Residues Asn35 and Asn38 are each glycosylated (N-linked (GlcNAc...) asparagine). The chain crosses the membrane as a helical span at residues 59–75; the sequence is AWSAAGAGGGGASSSSS. Positions 60-95 are disordered; the sequence is WSAAGAGGGGASSSSSSQHQHQQQQQQSNNSQRLSK. Positions 71–91 are enriched in low complexity; it reads SSSSSSQHQHQQQQQQSNNSQ. A glycan (N-linked (GlcNAc...) asparagine) is linked at Asn88. The required for DVL/RTFL small polypeptide activity stretch occupies residues 92–124; sequence RLSKKCVEAVKEHRARFYIVRRCVSMLVCWRDY.

It belongs to the DVL/RTFL small polypeptides family.

It is found in the cell membrane. In terms of biological role, small polypeptide acting as a regulatory molecule which coordinates cellular responses required for differentiation, growth and development, probably by restricting polar cell proliferation in lateral organs (e.g. leaves and petioles). The chain is Small polypeptide ROTUNDIFOLIA LIKE 3 from Oryza sativa subsp. japonica (Rice).